Consider the following 237-residue polypeptide: Demethylmenaquinone methyltransferase (237 aa).

S-adenosyl-L-methionine is bound by residues Thr58, Asp79, and 106 to 107; that span reads NA.

The protein belongs to the class I-like SAM-binding methyltransferase superfamily. MenG/UbiE family.

The catalysed reaction is a 2-demethylmenaquinol + S-adenosyl-L-methionine = a menaquinol + S-adenosyl-L-homocysteine + H(+). The protein operates within quinol/quinone metabolism; menaquinone biosynthesis; menaquinol from 1,4-dihydroxy-2-naphthoate: step 2/2. Functionally, methyltransferase required for the conversion of demethylmenaquinol (DMKH2) to menaquinol (MKH2). This is Demethylmenaquinone methyltransferase from Bacillus cytotoxicus (strain DSM 22905 / CIP 110041 / 391-98 / NVH 391-98).